Here is a 442-residue protein sequence, read N- to C-terminus: Putative FNIP repeat-containing protein L170 (442 aa).

3 FNIP repeats span residues 213–252, 253–294, and 295–348; these read FNSS…IGRG, FNSE…LGCF, and FNQS…FGMY.

The sequence is that of Putative FNIP repeat-containing protein L170 from Acanthamoeba polyphaga mimivirus (APMV).